The sequence spans 549 residues: Chaperonin GroEL (549 aa).

Residues 30–33, Lys51, 87–91, Gly415, and Asp496 each bind ATP; these read TLGP and DGTTT.

It belongs to the chaperonin (HSP60) family. As to quaternary structure, forms a cylinder of 14 subunits composed of two heptameric rings stacked back-to-back. Interacts with the co-chaperonin GroES.

The protein localises to the cytoplasm. It carries out the reaction ATP + H2O + a folded polypeptide = ADP + phosphate + an unfolded polypeptide.. Functionally, together with its co-chaperonin GroES, plays an essential role in assisting protein folding. The GroEL-GroES system forms a nano-cage that allows encapsulation of the non-native substrate proteins and provides a physical environment optimized to promote and accelerate protein folding. This chain is Chaperonin GroEL, found in Prosthecochloris aestuarii (strain DSM 271 / SK 413).